Reading from the N-terminus, the 44-residue chain is Somatoliberin (44 aa).

L44 carries the post-translational modification Leucine amide.

Belongs to the glucagon family.

The protein localises to the secreted. Functionally, GRF is released by the hypothalamus and acts on the adenohypophyse to stimulate the secretion of growth hormone. The sequence is that of Somatoliberin (GHRH) from Capra hircus (Goat).